The primary structure comprises 470 residues: Tubulin gamma chain (470 aa).

144-150 (AGGTGSG) provides a ligand contact to GTP.

It belongs to the tubulin family.

The protein localises to the cytoplasm. The protein resides in the cytoskeleton. It localises to the microtubule organizing center. It is found in the spindle pole body. Tubulin is the major constituent of microtubules. The gamma chain is found at microtubule organizing centers (MTOC) such as the spindle poles or the centrosome, suggesting that it is involved in the minus-end nucleation of microtubule assembly. This is Tubulin gamma chain (TUB4) from Eremothecium gossypii (strain ATCC 10895 / CBS 109.51 / FGSC 9923 / NRRL Y-1056) (Yeast).